A 446-amino-acid polypeptide reads, in one-letter code: Histidinol dehydrogenase homolog (446 aa).

His266 is a Zn(2+) binding site. Active-site proton acceptor residues include Glu334 and His335. His427 provides a ligand contact to Zn(2+).

This sequence belongs to the histidinol dehydrogenase family. The cofactor is Zn(2+).

The sequence is that of Histidinol dehydrogenase homolog from Colwellia psychrerythraea (strain 34H / ATCC BAA-681) (Vibrio psychroerythus).